The sequence spans 585 residues: Ankyrin repeat protein OPG003 (585 aa).

ANK repeat units follow at residues 66-98 (CGMS…NFDN), 172-220 (DGLT…NINA), 224-256 (IGNT…DTRI), 297-333 (EGHH…QKDE), and 336-365 (NTMT…DINL). Positions 554–571 (LPPEIIRNIITKLSDYHL) are PRANC/F-box-like.

This sequence belongs to the orthopoxvirus OPG003 family.

May be involved in virus-host protein interaction through the ankyrin repeats and PRANC regions. This chain is Ankyrin repeat protein OPG003 (OPG003), found in Homo sapiens (Human).